The primary structure comprises 222 residues: ATP-dependent dethiobiotin synthetase BioD 2 (222 aa).

Thr-17 serves as a coordination point for Mg(2+). Residue Lys-38 is part of the active site. Thr-42 contributes to the substrate binding site. Mg(2+) contacts are provided by Asp-55 and Glu-112. Residues Asp-55, 112–115 (EGCG), 172–173 (NR), 201–203 (PYL), and Glu-208 each bind ATP.

This sequence belongs to the dethiobiotin synthetase family. Homodimer. Mg(2+) serves as cofactor.

It is found in the cytoplasm. The catalysed reaction is (7R,8S)-7,8-diammoniononanoate + CO2 + ATP = (4R,5S)-dethiobiotin + ADP + phosphate + 3 H(+). It functions in the pathway cofactor biosynthesis; biotin biosynthesis; biotin from 7,8-diaminononanoate: step 1/2. Its function is as follows. Catalyzes a mechanistically unusual reaction, the ATP-dependent insertion of CO2 between the N7 and N8 nitrogen atoms of 7,8-diaminopelargonic acid (DAPA, also called 7,8-diammoniononanoate) to form a ureido ring. The chain is ATP-dependent dethiobiotin synthetase BioD 2 from Yersinia pestis.